A 314-amino-acid chain; its full sequence is Probable carboxylesterase 2 (314 aa).

Positions 79 to 81 (HGG) match the Involved in the stabilization of the negatively charged intermediate by the formation of the oxyanion hole motif. Active-site residues include Ser158, Asp254, and His286.

It belongs to the 'GDXG' lipolytic enzyme family. Expressed in roots and flowers.

The catalysed reaction is a carboxylic ester + H2O = an alcohol + a carboxylate + H(+). Its function is as follows. Carboxylesterase acting on esters with varying acyl chain length. The sequence is that of Probable carboxylesterase 2 (CXE2) from Arabidopsis thaliana (Mouse-ear cress).